Here is a 63-residue protein sequence, read N- to C-terminus: Overexpressed in colon carcinoma 1 protein homolog (63 aa).

A compositionally biased stretch (low complexity) spans 1–12; that stretch reads MGCGNSTAASAG. The segment at 1–40 is disordered; the sequence is MGCGNSTAASAGAGQGPAGAAKDVTEESITEDDKRRNYGG.

It belongs to the OCC1 family.

This Bos taurus (Bovine) protein is Overexpressed in colon carcinoma 1 protein homolog.